A 341-amino-acid polypeptide reads, in one-letter code: UDP-N-acetylglucosamine--N-acetylmuramyl-(pentapeptide) pyrophosphoryl-undecaprenol N-acetylglucosamine transferase (341 aa).

UDP-N-acetyl-alpha-D-glucosamine is bound by residues 10-12 (TGG), asparagine 124, serine 177, and glutamine 275.

Belongs to the glycosyltransferase 28 family. MurG subfamily.

The protein resides in the cell inner membrane. It catalyses the reaction di-trans,octa-cis-undecaprenyl diphospho-N-acetyl-alpha-D-muramoyl-L-alanyl-D-glutamyl-meso-2,6-diaminopimeloyl-D-alanyl-D-alanine + UDP-N-acetyl-alpha-D-glucosamine = di-trans,octa-cis-undecaprenyl diphospho-[N-acetyl-alpha-D-glucosaminyl-(1-&gt;4)]-N-acetyl-alpha-D-muramoyl-L-alanyl-D-glutamyl-meso-2,6-diaminopimeloyl-D-alanyl-D-alanine + UDP + H(+). The protein operates within cell wall biogenesis; peptidoglycan biosynthesis. Cell wall formation. Catalyzes the transfer of a GlcNAc subunit on undecaprenyl-pyrophosphoryl-MurNAc-pentapeptide (lipid intermediate I) to form undecaprenyl-pyrophosphoryl-MurNAc-(pentapeptide)GlcNAc (lipid intermediate II). This is UDP-N-acetylglucosamine--N-acetylmuramyl-(pentapeptide) pyrophosphoryl-undecaprenol N-acetylglucosamine transferase from Campylobacter hominis (strain ATCC BAA-381 / DSM 21671 / CCUG 45161 / LMG 19568 / NCTC 13146 / CH001A).